The following is a 284-amino-acid chain: F-box protein PP2-B5 (284 aa).

In terms of domain architecture, F-box spans 32–80 (ASFDDLPDDCLAIISSFTSTPRDAFLAALVSKSFGLQFNSDSVWEKFLP).

This chain is F-box protein PP2-B5 (PP2B5), found in Arabidopsis thaliana (Mouse-ear cress).